Here is a 148-residue protein sequence, read N- to C-terminus: Endoribonuclease YbeY (148 aa).

Residues His102, His106, and His112 each coordinate Zn(2+).

This sequence belongs to the endoribonuclease YbeY family. Requires Zn(2+) as cofactor.

It is found in the cytoplasm. Functionally, single strand-specific metallo-endoribonuclease involved in late-stage 70S ribosome quality control and in maturation of the 3' terminus of the 16S rRNA. The polypeptide is Endoribonuclease YbeY (Phytoplasma mali (strain AT)).